Here is a 102-residue protein sequence, read N- to C-terminus: Class II hydrophobin 3 (102 aa).

An N-terminal signal peptide occupies residues 1–16; sequence MQFLAVAALLFTTALA. Disulfide bonds link Cys-33–Cys-83, Cys-44–Cys-74, Cys-45–Cys-57, and Cys-84–Cys-95.

The protein belongs to the cerato-ulmin hydrophobin family. In terms of assembly, homotetramer. Further self-assembles to form highly ordered films at water-air interfaces through intermolecular interactions. As to expression, expressed in the conidia, vegetative growth and induction growth stages.

Its subcellular location is the secreted. It localises to the cell wall. The protein resides in the cytoplasm. Its function is as follows. Aerial growth, conidiation, and dispersal of filamentous fungi in the environment rely upon a capability of their secreting small amphipathic proteins called hydrophobins (HPBs) with low sequence identity. Class I can self-assemble into an outermost layer of rodlet bundles on aerial cell surfaces, conferring cellular hydrophobicity that supports fungal growth, development and dispersal; whereas Class II form highly ordered films at water-air interfaces through intermolecular interactions but contribute nothing to the rodlet structure. Hbf3 is a class II hydrophobin that has a role in vegetative growth and asexual development. The protein is Class II hydrophobin 3 of Hypocrea jecorina (strain QM6a) (Trichoderma reesei).